The sequence spans 583 residues: MASEPPSSPPGAGATLEDTLGWYKSQYEQLESELAEFRDSSRELEQELEKDIERAEKQERHHQEKAETLGFEVEEWKRKYRESKTEASASQNALEKEITTLRDTNRTLQLKLRDIEVANDDFERQARNTTSSLEDMESKYNQAIERAVMMEEEIKIGEQEREQLRIESQRLREELGDLKIEAELLQDKFKKQESRHLSTISTDLSVLASPTFDGHPASPGSTASSPLITTPTDSKSMTEDGDTLSELPDPPSPPMSDVSAPLPKVAASRPSAHRRTVSRSRLPSTDISTTPLPRSKPPTATTRAPGSRISTGGTTTMRTPAQRAVGPRSASNKLPTSNSLTHIRTLTAQMQRLEARVHSVRSKLPGPTRTPPRASPRTNVYSATNMPASITIRSRKRTSGSAASSVTGDDPTPTNIPTSTPKGSHVPRLSTSGVSRLSFGPLPNRGGPDEISRPSSRASTSYATSYARPPSRAAGEGIPRPISRASLTGVRTPMGRSRSSMGFHGHSASISSHLDLEEQDEGEFRTPSRRGTYSSQGGEVSGSGIPMPATRRRSGSRRISASTMRSSVSGPPRKQLSDLGETY.

Positions 14-195 form a coiled coil; that stretch reads ATLEDTLGWY…QDKFKKQESR (182 aa). Disordered stretches follow at residues 34-68, 211-339, and 358-583; these read LAEFRDSSRELEQELEKDIERAEKQERHHQEKAET, TFDG…TSNS, and HSVR…GETY. Positions 35-67 are enriched in basic and acidic residues; the sequence is AEFRDSSRELEQELEKDIERAEKQERHHQEKAE. 5 stretches are compositionally biased toward polar residues: residues 219–235, 279–319, 329–339, 379–392, and 399–422; these read PGSTASSPLITTPTDSK, RSRL…TMRT, SASNKLPTSNS, NVYSATNMPASITI, and SGSAASSVTGDDPTPTNIPTSTPK. Over residues 453–469 the composition is skewed to low complexity; that stretch reads RPSSRASTSYATSYARP. Positions 529 to 538 are enriched in polar residues; the sequence is RRGTYSSQGG.

This sequence belongs to the nudE family. In terms of assembly, self-associates. Interacts with PAC1.

Its subcellular location is the cytoplasm. The protein resides in the cytoskeleton. Required for nuclear migration. The sequence is that of Nuclear distribution protein nudE homolog 1 (NDE1) from Gibberella zeae (strain ATCC MYA-4620 / CBS 123657 / FGSC 9075 / NRRL 31084 / PH-1) (Wheat head blight fungus).